The following is a 1334-amino-acid chain: DNA-directed RNA polymerase subunit beta' (1334 aa).

Zn(2+) is bound by residues Cys213, Cys284, Cys291, and Cys294. Positions 1299–1308 are enriched in low complexity; it reads SSRGSSRFSR. The tract at residues 1299–1334 is disordered; it reads SSRGSSRFSRQPISDRWSEADEEGEEDDFEEDYEEE. Positions 1318–1334 are enriched in acidic residues; it reads ADEEGEEDDFEEDYEEE.

Belongs to the RNA polymerase beta' chain family. RpoC2 subfamily. In terms of assembly, in cyanobacteria the RNAP catalytic core is composed of 2 alpha, 1 beta, 1 beta', 1 gamma and 1 omega subunit. When a sigma factor is associated with the core the holoenzyme is formed, which can initiate transcription. Zn(2+) is required as a cofactor.

It catalyses the reaction RNA(n) + a ribonucleoside 5'-triphosphate = RNA(n+1) + diphosphate. Its function is as follows. DNA-dependent RNA polymerase catalyzes the transcription of DNA into RNA using the four ribonucleoside triphosphates as substrates. The protein is DNA-directed RNA polymerase subunit beta' of Microcystis aeruginosa (strain NIES-843 / IAM M-2473).